Consider the following 149-residue polypeptide: Protegrin-5 (149 aa).

A signal peptide spans 1–29 (METQRASLCLGRWSLWLLLLGLVVPSASA). Residues 30–130 (QALSYREAVL…DITCNEVQGV (101 aa)) constitute a propeptide that is removed on maturation. Residues 61 to 80 (DQPPKADEDPGTPKPVSFTV) are disordered. Intrachain disulfides connect cysteine 85–cysteine 96, cysteine 107–cysteine 124, cysteine 136–cysteine 145, and cysteine 138–cysteine 143. The residue at position 148 (arginine 148) is an Arginine amide.

Belongs to the cathelicidin family.

The protein localises to the secreted. Functionally, microbicidal activity. The chain is Protegrin-5 (NPG5) from Sus scrofa (Pig).